Reading from the N-terminus, the 1143-residue chain is DNA-directed RNA polymerase subunit beta (1143 aa).

This sequence belongs to the RNA polymerase beta chain family. As to quaternary structure, in plastids the minimal PEP RNA polymerase catalytic core is composed of four subunits: alpha, beta, beta', and beta''. When a (nuclear-encoded) sigma factor is associated with the core the holoenzyme is formed, which can initiate transcription.

The protein resides in the plastid. It localises to the chloroplast. The enzyme catalyses RNA(n) + a ribonucleoside 5'-triphosphate = RNA(n+1) + diphosphate. In terms of biological role, DNA-dependent RNA polymerase catalyzes the transcription of DNA into RNA using the four ribonucleoside triphosphates as substrates. This chain is DNA-directed RNA polymerase subunit beta, found in Porphyra purpurea (Red seaweed).